The following is a 351-amino-acid chain: Secreted frizzled-related sequence protein 4 (351 aa).

The first 18 residues, 1-18, serve as a signal peptide directing secretion; the sequence is MLRSILVALCLWLRLALG. The 121-residue stretch at 19-139 folds into the FZ domain; the sequence is VRGAPCEAVR…VYDRGVCISP (121 aa). 5 disulfides stabilise this stretch: Cys24–Cys85, Cys32–Cys78, Cys69–Cys108, Cys97–Cys136, and Cys101–Cys125. N-linked (GlcNAc...) asparagine glycosylation is found at Asn38 and Asn68. Asn116, Asn194, and Asn240 each carry an N-linked (GlcNAc...) asparagine glycan. One can recognise an NTR domain in the interval 178–306; sequence CKCKKVKPTL…TIQDKKQIAS (129 aa). Residues 293–303 show a composition bias toward basic and acidic residues; that stretch reads EQQRTIQDKKQ. Positions 293–351 are disordered; it reads EQQRTIQDKKQIASRTSRTSRSNPPKSKGRPPAPKPASPKKNIKARSAPKKSNLKKSAS. Residues 306–318 are compositionally biased toward low complexity; it reads SRTSRTSRSNPPK. Residues 333–351 show a composition bias toward basic residues; that stretch reads KNIKARSAPKKSNLKKSAS.

This sequence belongs to the secreted frizzled-related protein (sFRP) family. Expressed in the ovary. Localized to granulosa cells of periovulatory follicles and corpora lutea. Weakly expressed in adult tissues including kidney, brain and lung.

It is found in the secreted. Its function is as follows. Soluble frizzled-related proteins (sFRPS) function as modulators of Wnt signaling through direct interaction with Wnts. They have a role in regulating cell growth and differentiation in specific cell types. SFRP4 plays a role in bone morphogenesis. May also act as a regulator of adult uterine morphology and function. May also increase apoptosis during ovulation possibly through modulation of FZ1/FZ4/WNT4 signaling. Has phosphaturic effects by specifically inhibiting sodium-dependent phosphate uptake. The sequence is that of Secreted frizzled-related sequence protein 4 (Sfrp4) from Mus musculus (Mouse).